A 190-amino-acid polypeptide reads, in one-letter code: Putative CRISPR system CMR subunit Cmr7 2 (190 aa).

It belongs to the CRISPR system Cmr7 family. In terms of assembly, homodimer.

Its function is as follows. CRISPR (clustered regularly interspaced short palindromic repeat) is an adaptive immune system that provides protection against mobile genetic elements (viruses, transposable elements and conjugative plasmids). CRISPR clusters contain spacers, sequences complementary to antecedent mobile elements, and target invading nucleic acids. CRISPR clusters are transcribed and processed into CRISPR RNA (crRNA). The polypeptide is Putative CRISPR system CMR subunit Cmr7 2 (cmr7b) (Saccharolobus solfataricus (strain ATCC 35092 / DSM 1617 / JCM 11322 / P2) (Sulfolobus solfataricus)).